A 167-amino-acid polypeptide reads, in one-letter code: Endoribonuclease YbeY (167 aa).

Zn(2+) is bound by residues His131, His135, and His141.

This sequence belongs to the endoribonuclease YbeY family. Zn(2+) is required as a cofactor.

It localises to the cytoplasm. Single strand-specific metallo-endoribonuclease involved in late-stage 70S ribosome quality control and in maturation of the 3' terminus of the 16S rRNA. The chain is Endoribonuclease YbeY from Rickettsia conorii (strain ATCC VR-613 / Malish 7).